A 247-amino-acid polypeptide reads, in one-letter code: DNA polymerase sliding clamp 1 (247 aa).

The protein belongs to the PCNA family. Heterotrimer. The subunits circularize to form a toroid; DNA passes through its center. Replication factor C (RFC) is required to load the toroid on the DNA.

Functionally, sliding clamp subunit that acts as a moving platform for DNA processing. Responsible for tethering the catalytic subunit of DNA polymerase and other proteins to DNA during high-speed replication. The chain is DNA polymerase sliding clamp 1 from Aeropyrum pernix (strain ATCC 700893 / DSM 11879 / JCM 9820 / NBRC 100138 / K1).